Consider the following 406-residue polypeptide: Tyrosine--tRNA ligase (406 aa).

Residue Tyr35 participates in L-tyrosine binding. Positions 40-49 (ATSTSLHIGH) match the 'HIGH' region motif. 2 residues coordinate L-tyrosine: Tyr166 and Gln170. A 'KMSKS' region motif is present at residues 226-230 (KMGKS). Lys229 serves as a coordination point for ATP. Residues 341–405 (ILLIDLMVLS…IGKKRILRVI (65 aa)) form the S4 RNA-binding domain.

Belongs to the class-I aminoacyl-tRNA synthetase family. TyrS type 1 subfamily. As to quaternary structure, homodimer.

It is found in the cytoplasm. The enzyme catalyses tRNA(Tyr) + L-tyrosine + ATP = L-tyrosyl-tRNA(Tyr) + AMP + diphosphate + H(+). Catalyzes the attachment of tyrosine to tRNA(Tyr) in a two-step reaction: tyrosine is first activated by ATP to form Tyr-AMP and then transferred to the acceptor end of tRNA(Tyr). In Borrelia turicatae (strain 91E135), this protein is Tyrosine--tRNA ligase.